The chain runs to 303 residues: Elongation factor Ts (303 aa).

Residues 79 to 82 (TDFV) form an involved in Mg(2+) ion dislocation from EF-Tu region.

Belongs to the EF-Ts family.

It is found in the cytoplasm. In terms of biological role, associates with the EF-Tu.GDP complex and induces the exchange of GDP to GTP. It remains bound to the aminoacyl-tRNA.EF-Tu.GTP complex up to the GTP hydrolysis stage on the ribosome. This is Elongation factor Ts from Syntrophotalea carbinolica (strain DSM 2380 / NBRC 103641 / GraBd1) (Pelobacter carbinolicus).